Here is a 349-residue protein sequence, read N- to C-terminus: MFNMINLLDLSLEDLKKWMIENKEKEFRAKQVLDWVYKGVYNFEAMKNIPKVITNKLQENFYLSVPSVVQKYVSKDESTVKFLFKYNDGNIIESVVMKYKHGNTICVSTQVGCKMGCTFCASTIGGIVRSLSHGEILGQVLKAQEETGERISNIVMMGSGEPLDNYDNSLNFIRMVNAENGLNIGQRHITLSTCGIVPKIRQLAEENLQITLAISLHAPNDNIRRKTMPIASVYSVEELIEACNYYINKTNRRITFEYALVSNLNDKEVHAEELATLLKGMLCHVNLIPVNKIDEKDFKSSSTNRIKNFSNILLKSGIQTTIRREMGSDINAACGQLRRRYVKNNSKEV.

The active-site Proton acceptor is the Glu93. Residues 99–329 form the Radical SAM core domain; it reads YKHGNTICVS…TTIRREMGSD (231 aa). A disulfide bridge links Cys106 with Cys334. Residues Cys113, Cys117, and Cys120 each coordinate [4Fe-4S] cluster. S-adenosyl-L-methionine contacts are provided by residues 160 to 161, Ser192, 215 to 217, and Asn291; these read GE and SLH. Cys334 (S-methylcysteine intermediate) is an active-site residue.

The protein belongs to the radical SAM superfamily. RlmN family. [4Fe-4S] cluster serves as cofactor.

The protein localises to the cytoplasm. It carries out the reaction adenosine(2503) in 23S rRNA + 2 reduced [2Fe-2S]-[ferredoxin] + 2 S-adenosyl-L-methionine = 2-methyladenosine(2503) in 23S rRNA + 5'-deoxyadenosine + L-methionine + 2 oxidized [2Fe-2S]-[ferredoxin] + S-adenosyl-L-homocysteine. The catalysed reaction is adenosine(37) in tRNA + 2 reduced [2Fe-2S]-[ferredoxin] + 2 S-adenosyl-L-methionine = 2-methyladenosine(37) in tRNA + 5'-deoxyadenosine + L-methionine + 2 oxidized [2Fe-2S]-[ferredoxin] + S-adenosyl-L-homocysteine. Its function is as follows. Specifically methylates position 2 of adenine 2503 in 23S rRNA and position 2 of adenine 37 in tRNAs. This Clostridium tetani (strain Massachusetts / E88) protein is Probable dual-specificity RNA methyltransferase RlmN.